Reading from the N-terminus, the 464-residue chain is Na(+)/H(+) antiporter NhaA (464 aa).

12 helical membrane-spanning segments follow: residues 37-57, 82-102, 118-138, 145-165, 176-196, 200-220, 226-246, 248-268, 321-341, 360-380, 396-416, and 430-450; these read GSGI…NTSC, IHYW…GLEI, VLPI…YFSF, VSGW…ILLL, AVLV…IAIF, NLAW…LLLN, ALWA…FSGV, ATVA…YSPT, ILNT…NAGV, VFFG…MICV, VLGI…VSEL, and ITIL…LRFI.

Belongs to the NhaA Na(+)/H(+) (TC 2.A.33) antiporter family.

It is found in the cell inner membrane. It carries out the reaction Na(+)(in) + 2 H(+)(out) = Na(+)(out) + 2 H(+)(in). Na(+)/H(+) antiporter that extrudes sodium in exchange for external protons. This is Na(+)/H(+) antiporter NhaA from Dichelobacter nodosus (strain VCS1703A).